Consider the following 208-residue polypeptide: Probable GTP-binding protein EngB (208 aa).

Positions 22-195 (GLPEIALAGR…WHSIEEIFIA (174 aa)) constitute an EngB-type G domain. GTP-binding positions include 30–37 (GRSNVGKS), 57–61 (GKTRT), 75–78 (DLPG), 142–145 (TKSD), and 174–176 (ISS). Mg(2+)-binding residues include Ser-37 and Thr-59.

This sequence belongs to the TRAFAC class TrmE-Era-EngA-EngB-Septin-like GTPase superfamily. EngB GTPase family. Mg(2+) serves as cofactor.

Functionally, necessary for normal cell division and for the maintenance of normal septation. In Alkaliphilus oremlandii (strain OhILAs) (Clostridium oremlandii (strain OhILAs)), this protein is Probable GTP-binding protein EngB.